A 442-amino-acid polypeptide reads, in one-letter code: MASKSIHKKHQENSQQDKNQFSVHHYLDPNQSIHALISCSEKKYEKNQNQKKNPLPSSYYHQKRNPGSSAHSPYGSVDESSRTAVSPAMDMVSNQAPIHTRQVSAPNLHTSVNNGQSSATVPHPSHHNVHHQHSKSVSALPMTIGYSPVPSHVKSVSHEANYSYAGLSEIPQQQGMMQQNREKSLSLDPMRRPFMTPQDVEQLPMPQGWEMCYDSDGVRYFKDHNSKTTTWDDPRLKQQEQTGFGLGENIGQNRYNNCYDNGHSSRSLPSIHQHQQMIPNHPQPQYSSQQQMDYIQQLQNERMMIQEKNAQLINSGLVDSPQPPYQAISPMSSTMMHSHDPNFMYQQQQQAQNSQQQQTPHTLHQIPNQYQNSQMNDDSAMEVDYSMVSHPQQLQHQHQPHMHNNMPSNYVIDDINPHEFDQYLQISNDNNRGVGSMVHHYQ.

Over residues 1 to 10 the composition is skewed to basic residues; that stretch reads MASKSIHKKH. The disordered stretch occupies residues 1 to 84; it reads MASKSIHKKH…GSVDESSRTA (84 aa). Polar residues-rich tracts occupy residues 13–22 and 55–71; these read NSQQDKNQFS and LPSS…SSAH. The residue at position 104 (Ser104) is a Phosphoserine. Positions 108–120 are enriched in polar residues; that stretch reads LHTSVNNGQSSAT. Residues 108 to 136 are disordered; that stretch reads LHTSVNNGQSSATVPHPSHHNVHHQHSKS. Residues 124–134 show a composition bias toward basic residues; it reads PSHHNVHHQHS. Residues 203 to 236 enclose the WW domain; sequence LPMPQGWEMCYDSDGVRYFKDHNSKTTTWDDPRL.

Belongs to the YAP1 family. Highly divergent. Interacts (via WW domain) with wts-1 (via N-terminus). Interacts (via WW domain) with egl-44; the interaction may regulate transcription. As to expression, expressed in epithelia, hypodermis, muscles, pharynx, intestine, gonadal sheath cells, vulva, spermatheca and in excretory tissue.

It localises to the cytoplasm. The protein resides in the nucleus. Its subcellular location is the cell projection. The protein localises to the cilium. It is found in the cytoskeleton. It localises to the cilium axoneme. Its function is as follows. Plays a role in thermal stress response and in aging. The protein is Yes-associated protein homolog 1 of Caenorhabditis elegans.